Here is a 1118-residue protein sequence, read N- to C-terminus: Sodium-driven chloride bicarbonate exchanger (1118 aa).

Disordered stretches follow at residues 1–23, 58–96, 245–312, and 457–476; these read MEIK…EEAV, GRKS…DTPS, KQSE…PPHQ, and NGTA…GPEL. At 1–509 the chain is on the cytoplasmic side; sequence MEIKDQGAQM…DFRDAFSLQC (509 aa). Basic residues predominate over residues 59 to 76; the sequence is RKSHRRHRHRGHKHRKRD. The span at 77–90 shows a compositional bias: basic and acidic residues; it reads RERDSGLEDGRESP. The residue at position 89 (Ser89) is a Phosphoserine. Position 94 is a phosphothreonine (Thr94). A compositionally biased stretch (polar residues) spans 248 to 264; that stretch reads EPNSMDKNAGQVVSPQS. The residue at position 276 (Ser276) is a Phosphoserine. The chain crosses the membrane as a helical span at residues 510–530; the sequence is LASFLFLYCACMSPVITFGGL. Over 531 to 538 the chain is Extracellular; it reads LGEATEGR. A helical membrane pass occupies residues 539–559; it reads ISAIESLFGASMTGIAYSLFG. Over 560 to 562 the chain is Cytoplasmic; it reads GQP. The chain crosses the membrane as a helical span at residues 563–583; sequence LTILGSTGPVLVFEKILFKFC. At 584 to 596 the chain is on the extracellular side; the sequence is KEYGLSYLSLRAS. Residues 597-617 traverse the membrane as a helical segment; sequence IGLWTATLCIILVATDASSLV. At 618 to 626 the chain is on the cytoplasmic side; the sequence is CYITRFTEE. The helical transmembrane segment at 627-647 threads the bilayer; the sequence is AFASLICIIFIYEALEKLFEL. The Extracellular portion of the chain corresponds to 648 to 720; the sequence is SEAYPINMHN…VGRACGHDHP (73 aa). N-linked (GlcNAc...) asparagine glycosylation is found at Asn674, Asn677, Asn687, and Asn697. Residues 721 to 741 form a helical membrane-spanning segment; sequence YVPDVLFWSVILFFSTVTLSA. The Cytoplasmic portion of the chain corresponds to 742–762; that stretch reads TLKQFKTSRYFPTKVRSIVSD. Residues 763 to 783 form a helical membrane-spanning segment; sequence FAVFLTILCMVLIDYAIGIPS. Topologically, residues 784–809 are extracellular; that stretch reads PKLQVPSVFKPTRDDRGWFVTPLGPN. Residues 810 to 830 form a helical membrane-spanning segment; that stretch reads PWWTVIAAIIPALLCTILIFM. Residues 831–855 are Cytoplasmic-facing; that stretch reads DQQITAVIINRKEHKLKKGCGYHLD. A helical membrane pass occupies residues 856-876; the sequence is LLMVAVMLGVCSIMGLPWFVA. Residues 877-912 lie on the Extracellular side of the membrane; it reads ATVLSITHVNSLKLESECSAPGEQPKFLGIREQRVT. A helical membrane pass occupies residues 913–933; the sequence is GLMIFILMGSSVFMTSILKFI. Topologically, residues 934 to 935 are cytoplasmic; it reads PM. A helical membrane pass occupies residues 936-956; that stretch reads PVLYGVFLYMGASSLKGIQFF. At 957–998 the chain is on the extracellular side; it reads DRIKLFWMPAKHQPDFIYLRHVPLRKVHLFTIIQMSCLGLLW. Residues 999-1019 form a helical membrane-spanning segment; it reads IIKVSRAAIVFPMMVLALVFV. Topologically, residues 1020–1118 are cytoplasmic; that stretch reads RKLMDLLFTK…SSFPSKSSPS (99 aa). Phosphoserine occurs at positions 1057 and 1085.

It belongs to the anion exchanger (TC 2.A.31) family. In terms of tissue distribution, predominantly expressed in the brain.

The protein resides in the basolateral cell membrane. It is found in the apical cell membrane. The protein localises to the cell projection. It localises to the dendrite. Its subcellular location is the axon. The protein resides in the perikaryon. It is found in the presynapse. The protein localises to the postsynapse. The enzyme catalyses 2 hydrogencarbonate(out) + chloride(in) + Na(+)(out) = 2 hydrogencarbonate(in) + chloride(out) + Na(+)(in). Functionally, sodium/bicarbonate cotransporter which plays an important role in regulating intracellular pH. Has been shown to act as a sodium/bicarbonate cotransporter in exchange for intracellular chloride. Has also been shown to act as a sodium/biocarbonate cotransporter which does not couple net influx of bicarbonate to net efflux of chloride, with the observed chloride efflux being due to chloride self-exchange. Controls neuronal pH and may contribute to the secretion of cerebrospinal fluid. Acting on presynaptic intracellular pH, it promotes GABA release, reduces the excitability of CA1 pyramidal neurons, and modulates short-term synaptic plasticity. Required in retinal cells to maintain normal pH which is necessary for normal vision. In the kidney, likely to mediate bicarbonate reclamation in the apical membrane of the proximal tubules. The protein is Sodium-driven chloride bicarbonate exchanger of Homo sapiens (Human).